Reading from the N-terminus, the 109-residue chain is Large ribosomal subunit protein uL24 (109 aa).

The protein belongs to the universal ribosomal protein uL24 family. As to quaternary structure, part of the 50S ribosomal subunit.

One of two assembly initiator proteins, it binds directly to the 5'-end of the 23S rRNA, where it nucleates assembly of the 50S subunit. Functionally, one of the proteins that surrounds the polypeptide exit tunnel on the outside of the subunit. This is Large ribosomal subunit protein uL24 from Legionella pneumophila (strain Paris).